The sequence spans 249 residues: Gamma-glutamyl peptidase 3 (249 aa).

The Glutamine amidotransferase type-1 domain occupies 19-217; sequence SEFVKKTYGG…VDRVLNMKLM (199 aa). Catalysis depends on Cys-103, which acts as the Nucleophile. Active-site residues include His-196 and Glu-198.

This sequence belongs to the peptidase C26 family.

Its subcellular location is the cytoplasm. It is found in the cytosol. The enzyme catalyses an S-[(1E)-1-(hydroxyimino)-omega-(methylsulfanyl)alkyl]-L-glutathione + H2O = an S-[(1E)-1-(hydroxyimino)-omega-(methylsulfanyl)alkyl]-L-cysteinylglycine + L-glutamate. It carries out the reaction (E)-1-(glutathione-S-yl)-2-(1H-indol-3-yl)acetohydroximate + H2O = (E)-1-(glycyl-L-cystein-S-yl)-2-(1H-indol-3-yl)acetohydroximate + L-glutamate. The catalysed reaction is 2-(glutathion-S-yl)-2-(1H-indol-3-yl)acetonitrile + H2O = 2-(glycyl-L-cystein-S-yl)-2-(1H-indol-3-yl)acetonitrile + L-glutamate. It catalyses the reaction (Z)-1-(glutathione-S-yl)-2-phenylacetohydroximate + H2O = (Z)-1-(glycyl-L-cystein-S-yl)-2-phenylacetohydroximate + L-glutamate. It functions in the pathway secondary metabolite biosynthesis. Its function is as follows. Involved in glucosinolate biosynthesis. Hydrolyzes the gamma-glutamyl peptide bond of several glutathione (GSH) conjugates to produce Cys-Gly conjugates related to glucosinolates. The gamma-Glu-Cys-Gly-GSH conjugates are the sulfur-donating molecule in glucosinolate biosynthesis. Can use the GSH conjugate of the camalexin intermediate IAN (GS-IAN) as substrate. Required for the biosynthesis of camalexin, a pathogen-inducible phytoalexin with antibacterial and antifungal properties. This Arabidopsis thaliana (Mouse-ear cress) protein is Gamma-glutamyl peptidase 3.